A 278-amino-acid polypeptide reads, in one-letter code: Sulfide dehydrogenase subunit beta (278 aa).

A propeptide spanning residues 1 to 4 (MFKI) is cleaved from the precursor. The FAD-binding FR-type domain maps to 1–95 (MFKILRKERL…LGPLGKPSHI (95 aa)). Cys222, Cys225, and Cys237 together coordinate [2Fe-2S] cluster.

Heterodimer of alpha and beta subunits. FAD is required as a cofactor. The cofactor is [2Fe-2S] cluster.

The protein localises to the cytoplasm. It carries out the reaction n sulfur + hydrogen sulfide + NADP(+) = (n+1) sulfur + NADPH. The enzyme catalyses 2 reduced [2Fe-2S]-[ferredoxin] + NADP(+) + H(+) = 2 oxidized [2Fe-2S]-[ferredoxin] + NADPH. Its function is as follows. A bifunctional enzyme that catalyzes the reduction of elemental sulfur or polysulfide to hydrogen sulfide with NADPH as electron donor. Also functions as a reduced ferredoxin:NADP oxidoreductase with a very high affinity for reduced ferredoxin. Exhibits a broad specificity for various physiological and non-physiological substrates with varied reduction potentials such as methyl viologen, benzyl viologen, FAD, FMN, methylene blue, 2,6-dichlorophenolindophenol (DCIP), cytochrome C and ferricyanide with highest preference for benzyl viologen. Does not reduce fumarate, succinate, nitrate, nitrite, sulfate, sulfite or protons. Does not possess any hydrogenase activity or NADPH-dependent glutamate synthase activity. In Pyrococcus furiosus (strain ATCC 43587 / DSM 3638 / JCM 8422 / Vc1), this protein is Sulfide dehydrogenase subunit beta.